A 208-amino-acid chain; its full sequence is FMN-dependent NADH:quinone oxidoreductase 1 (208 aa).

Residue 17–19 (SVS) coordinates FMN.

It belongs to the azoreductase type 1 family. As to quaternary structure, homodimer. FMN serves as cofactor.

It carries out the reaction 2 a quinone + NADH + H(+) = 2 a 1,4-benzosemiquinone + NAD(+). The enzyme catalyses N,N-dimethyl-1,4-phenylenediamine + anthranilate + 2 NAD(+) = 2-(4-dimethylaminophenyl)diazenylbenzoate + 2 NADH + 2 H(+). Functionally, quinone reductase that provides resistance to thiol-specific stress caused by electrophilic quinones. In terms of biological role, also exhibits azoreductase activity. Catalyzes the reductive cleavage of the azo bond in aromatic azo compounds to the corresponding amines. The chain is FMN-dependent NADH:quinone oxidoreductase 1 from Listeria monocytogenes serovar 1/2a (strain ATCC BAA-679 / EGD-e).